Reading from the N-terminus, the 346-residue chain is Signal recognition particle receptor FtsY (346 aa).

Residues 143-150 (GVNGVGKT), 225-229 (DTSGR), and 289-292 (TKMD) contribute to the GTP site.

Belongs to the GTP-binding SRP family. FtsY subfamily. Part of the signal recognition particle protein translocation system, which is composed of SRP and FtsY.

Its subcellular location is the cell membrane. The protein localises to the cytoplasm. It catalyses the reaction GTP + H2O = GDP + phosphate + H(+). Functionally, involved in targeting and insertion of nascent membrane proteins into the cytoplasmic membrane. Acts as a receptor for the complex formed by the signal recognition particle (SRP) and the ribosome-nascent chain (RNC). The sequence is that of Signal recognition particle receptor FtsY from Mycoplasma genitalium (strain ATCC 33530 / DSM 19775 / NCTC 10195 / G37) (Mycoplasmoides genitalium).